A 146-amino-acid chain; its full sequence is Catabolic 3-dehydroquinase (146 aa).

Y24 functions as the Proton acceptor in the catalytic mechanism. Substrate contacts are provided by N78, H84, and D91. Residue H104 is the Proton donor of the active site. Residues 105–106 (IT) and R115 each bind substrate.

Belongs to the type-II 3-dehydroquinase family. Homododecamer. Adopts a ring-like structure, composed of an arrangement of two hexameric rings stacked on top of one another.

It catalyses the reaction 3-dehydroquinate = 3-dehydroshikimate + H2O. The protein operates within aromatic compound metabolism; 3,4-dihydroxybenzoate biosynthesis; 3,4-dihydroxybenzoate from 3-dehydroquinate: step 1/2. Functionally, is involved in the catabolism of quinate. Allows the utilization of quinate as carbon source via the beta-ketoadipate pathway. The protein is Catabolic 3-dehydroquinase of Meyerozyma guilliermondii (strain ATCC 6260 / CBS 566 / DSM 6381 / JCM 1539 / NBRC 10279 / NRRL Y-324) (Yeast).